The sequence spans 343 residues: Thymidine kinase (343 aa).

Position 27–34 (27–34 (GAYGIGKS)) interacts with ATP. Glu-56 acts as the Proton acceptor in catalysis. Tyr-74 and Gln-98 together coordinate substrate. Arg-188 lines the ATP pocket. Arg-194 contacts substrate.

The protein belongs to the herpesviridae thymidine kinase family. In terms of assembly, homodimer.

It catalyses the reaction thymidine + ATP = dTMP + ADP + H(+). Its function is as follows. Catalyzes the transfer of the gamma-phospho group of ATP to thymidine to generate dTMP in the salvage pathway of pyrimidine synthesis. The dTMP serves as a substrate for DNA polymerase during viral DNA replication. Allows the virus to be reactivated and to grow in non-proliferative cells lacking a high concentration of phosphorylated nucleic acid precursors. In Felidae (cat family), this protein is Thymidine kinase.